Reading from the N-terminus, the 457-residue chain is Putative zinc finger CCCH domain-containing protein 21 (457 aa).

4 disordered regions span residues 51–73 (PTSS…ARAS), 102–130 (LESP…EKLL), 195–221 (TSPS…ERER), and 280–329 (RKQA…RLRV). Over residues 57–66 (DGGGGGGGGY) the composition is skewed to gly residues. Positions 215 to 276 (ASAEREREVR…HLSLLLEELE (62 aa)) form a coiled coil. 2 C3H1-type zinc fingers span residues 382-409 (AAKT…HGLQ) and 419-447 (RYKT…HSPL).

In Oryza sativa subsp. japonica (Rice), this protein is Putative zinc finger CCCH domain-containing protein 21.